The primary structure comprises 485 residues: MTITPQNLIALLPLLIVGLTVVVVMLSIAWRRNHFLNATLSVIGLNAALVSLWFVGQAGAMDVTPLMRVDGFAMLYTGLVLLASLATCTFAYPWLEGYNDNKDEFYLLVLIAALGGILLANANHLASLFLGIELISLPLFGLVGYAFRQKRSLEASIKYTILSAAASSFLLFGMALVYAQSGDLSFVALGKNLGDGMLNEPLLLAGFGMMIVGLGFKLSLVPFHLWTPDVYQGAPAPVSTFLATASKIAIFGVVMRLFLYAPVGDSEAIRVVLAIIAFASIIFGNLMALSQTNIKRLLGYSSISHLGYLLVALIALQTGEMSMEAVGVYLAGYLFSSLGAFGVVSLMSSPYRGPDADSLFSYRGLFWHRPILAAVMTVMMLSLAGIPMTLGFIGKFYVLAVGVQAHLWWLVGAVVVGSAIGLYYYLRVAVSLYLHAPEQPGRDAPSNWQYSAGGIVVLISALLVLVLGVWPQSLISIVRLAMPLM.

The next 14 membrane-spanning stretches (helical) occupy residues 8–28, 35–55, 71–91, 105–125, 127–147, 159–179, 203–223, 235–255, 271–291, 297–317, 326–346, 373–393, 408–430, and 450–470; these read LIAL…MLSI, FLNA…LWFV, GFAM…CTFA, FYLL…ANHL, SLFL…GYAF, YTIL…LVYA, LLAG…LVPF, PAPV…GVVM, VVLA…ALSQ, LLGY…IALQ, VGVY…VVSL, AAVM…LGFI, WWLV…RVAV, and YSAG…LGVW.

It belongs to the complex I subunit 2 family. NDH-1 is composed of 13 different subunits. Subunits NuoA, H, J, K, L, M, N constitute the membrane sector of the complex.

The protein localises to the cell inner membrane. It catalyses the reaction a quinone + NADH + 5 H(+)(in) = a quinol + NAD(+) + 4 H(+)(out). Its function is as follows. NDH-1 shuttles electrons from NADH, via FMN and iron-sulfur (Fe-S) centers, to quinones in the respiratory chain. The immediate electron acceptor for the enzyme in this species is believed to be ubiquinone. Couples the redox reaction to proton translocation (for every two electrons transferred, four hydrogen ions are translocated across the cytoplasmic membrane), and thus conserves the redox energy in a proton gradient. The polypeptide is NADH-quinone oxidoreductase subunit N (Shigella boydii serotype 4 (strain Sb227)).